The primary structure comprises 404 residues: Serine/threonine-protein kinase UCN (404 aa).

Residues 22-340 form the Protein kinase domain; that stretch reads LKVLKLLGKG…AAEIKEHAFF (319 aa). Residues 28–36 and Lys-55 each bind ATP; that span reads LGKGATGTV. Asp-153 acts as the Proton acceptor in catalysis. The disordered stretch occupies residues 185–207; it reads EFYHLSDPEPDPNPESNLSHNKK. The 64-residue stretch at 341–404 folds into the AGC-kinase C-terminal domain; it reads KGVRWELLTE…CSENNPFVDF (64 aa).

Belongs to the protein kinase superfamily. AGC Ser/Thr protein kinase family. In terms of tissue distribution, expressed in the epidermis and cortex of the transition zone of the root apex and developing flowers. Expressed in rosette leaves, stems and siliques.

The protein resides in the cytoplasm. It is found in the nucleus. The catalysed reaction is L-seryl-[protein] + ATP = O-phospho-L-seryl-[protein] + ADP + H(+). It carries out the reaction L-threonyl-[protein] + ATP = O-phospho-L-threonyl-[protein] + ADP + H(+). Functionally, regulates planar ovule integument development by suppressing aberrantly oriented growth. Maintains planar growth of integuments by repressing the developmental regulator and transcription factor KAN4 which is involved in the control of early integument growth and polarity. Restricts growth in stamen filaments, petals, and cotyledons. This chain is Serine/threonine-protein kinase UCN, found in Arabidopsis thaliana (Mouse-ear cress).